Here is a 589-residue protein sequence, read N- to C-terminus: Pyruvate kinase (589 aa).

Arg-32 serves as a coordination point for substrate. Positions 34, 36, 66, and 67 each coordinate K(+). 34–37 (NFSH) provides a ligand contact to ATP. ATP-binding residues include Arg-73 and Lys-157. Residue Glu-223 coordinates Mg(2+). The substrate site is built by Gly-246, Asp-247, and Thr-279. A Mg(2+)-binding site is contributed by Asp-247.

Belongs to the pyruvate kinase family. It in the C-terminal section; belongs to the PEP-utilizing enzyme family. In terms of assembly, homotetramer. It depends on Mg(2+) as a cofactor. K(+) serves as cofactor.

The enzyme catalyses pyruvate + ATP = phosphoenolpyruvate + ADP + H(+). It functions in the pathway carbohydrate degradation; glycolysis; pyruvate from D-glyceraldehyde 3-phosphate: step 5/5. With respect to regulation, strongly activated by glucose-6-phosphate, ribose-5-phosphate and fructose-6-phosphate. Weak activator AMP and weak inhibitor fructose-1,6-bisphosphate can act as strong inhibitors in the presence of strong activators. The sequence is that of Pyruvate kinase (pyk) from Lactobacillus delbrueckii subsp. bulgaricus.